A 112-amino-acid chain; its full sequence is MTALTQMKCEACQADAPKVTDAELAELIRMIPDWGVQVRDGIMQLERVYKFKNFKLAMAFTNKLAELAEEEFHHPGILTEWGKVTVTWWSHSIKGLHKNDFIMAAKTDQLLD.

It belongs to the pterin-4-alpha-carbinolamine dehydratase family.

It catalyses the reaction (4aS,6R)-4a-hydroxy-L-erythro-5,6,7,8-tetrahydrobiopterin = (6R)-L-erythro-6,7-dihydrobiopterin + H2O. The protein is Putative pterin-4-alpha-carbinolamine dehydratase of Shewanella sp. (strain MR-7).